Reading from the N-terminus, the 223-residue chain is Ribose-5-phosphate isomerase A (223 aa).

Substrate is bound by residues 32 to 35 (TGST), 85 to 88 (DGAD), and 98 to 101 (KGGG). Catalysis depends on Glu-107, which acts as the Proton acceptor. Lys-125 is a substrate binding site.

It belongs to the ribose 5-phosphate isomerase family. Homodimer.

The enzyme catalyses aldehydo-D-ribose 5-phosphate = D-ribulose 5-phosphate. It participates in carbohydrate degradation; pentose phosphate pathway; D-ribose 5-phosphate from D-ribulose 5-phosphate (non-oxidative stage): step 1/1. Functionally, catalyzes the reversible conversion of ribose-5-phosphate to ribulose 5-phosphate. The chain is Ribose-5-phosphate isomerase A from Pseudomonas syringae pv. syringae (strain B728a).